The chain runs to 387 residues: Putative 8-amino-7-oxononanoate synthase (387 aa).

R19 contributes to the substrate binding site. 107-108 (GY) is a binding site for pyridoxal 5'-phosphate. A substrate-binding site is contributed by H132. Residues S180, 206–209 (DEAH), and 237–240 (TFGK) contribute to the pyridoxal 5'-phosphate site. K240 carries the post-translational modification N6-(pyridoxal phosphate)lysine. T354 contacts substrate.

The protein belongs to the class-II pyridoxal-phosphate-dependent aminotransferase family. BioF subfamily. As to quaternary structure, homodimer. It depends on pyridoxal 5'-phosphate as a cofactor.

It carries out the reaction 6-carboxyhexanoyl-[ACP] + L-alanine + H(+) = (8S)-8-amino-7-oxononanoate + holo-[ACP] + CO2. The protein operates within cofactor biosynthesis; biotin biosynthesis. Catalyzes the decarboxylative condensation of pimeloyl-[acyl-carrier protein] and L-alanine to produce 8-amino-7-oxononanoate (AON), [acyl-carrier protein], and carbon dioxide. The chain is Putative 8-amino-7-oxononanoate synthase (bioF) from Pasteurella multocida (strain Pm70).